The sequence spans 461 residues: Fumarate hydratase class II (461 aa).

Substrate-binding positions include 97-99, 127-130, 137-139, and Thr-185; these read SGT, HPND, and SSN. His-186 (proton donor/acceptor) is an active-site residue. Residue Ser-316 is part of the active site. Substrate contacts are provided by residues Ser-317 and 322-324; that span reads KVN.

It belongs to the class-II fumarase/aspartase family. Fumarase subfamily. In terms of assembly, homotetramer.

Its subcellular location is the cytoplasm. It catalyses the reaction (S)-malate = fumarate + H2O. It functions in the pathway carbohydrate metabolism; tricarboxylic acid cycle; (S)-malate from fumarate: step 1/1. Its function is as follows. Involved in the TCA cycle. Catalyzes the stereospecific interconversion of fumarate to L-malate. The protein is Fumarate hydratase class II of Oceanobacillus iheyensis (strain DSM 14371 / CIP 107618 / JCM 11309 / KCTC 3954 / HTE831).